The sequence spans 249 residues: Type III pantothenate kinase (249 aa).

Residue 6–13 (DVGNTHTT) coordinates ATP. 101 to 104 (GADR) is a binding site for substrate. Asp-103 acts as the Proton acceptor in catalysis. Asp-123 is a K(+) binding site. Thr-126 serves as a coordination point for ATP. A substrate-binding site is contributed by Thr-177.

The protein belongs to the type III pantothenate kinase family. In terms of assembly, homodimer. It depends on NH4(+) as a cofactor. The cofactor is K(+).

It is found in the cytoplasm. The catalysed reaction is (R)-pantothenate + ATP = (R)-4'-phosphopantothenate + ADP + H(+). It participates in cofactor biosynthesis; coenzyme A biosynthesis; CoA from (R)-pantothenate: step 1/5. Functionally, catalyzes the phosphorylation of pantothenate (Pan), the first step in CoA biosynthesis. This Thermosipho africanus (strain TCF52B) protein is Type III pantothenate kinase.